Reading from the N-terminus, the 783-residue chain is Isoamylase 1, chloroplastic (783 aa).

The N-terminal 43 residues, 1 to 43 (MDAIKCSSSFLHHTKLNTLFSNHTFPKISAPNFKPLFRPISIS), are a transit peptide targeting the chloroplast. The active-site Nucleophile is the Asp-410. The active-site Proton donor is the Glu-466.

This sequence belongs to the glycosyl hydrolase 13 family. As to quaternary structure, associates with ISA2 to form the heteromultimeric complex Iso1 required for amylopectin synthesis.

Its subcellular location is the plastid. It is found in the chloroplast. The enzyme catalyses Hydrolysis of (1-&gt;6)-alpha-D-glucosidic branch linkages in glycogen, amylopectin and their beta-limit dextrins.. It participates in glycan biosynthesis; starch biosynthesis. Its function is as follows. Involved in the trimming of pre-amylopectin chains. Accelerates the crystallization of nascent amylopectin molecules during starch synthesis. ISA1 and ISA2 work exclusively together as a multimeric holoenzyme. ISA1-ISA2 removes preferentially branches that are very close to other branches. Promotes negative gravitropic responses in shoots by facilitating starch granules (statoliths) formation in hypocotyls. The protein is Isoamylase 1, chloroplastic of Arabidopsis thaliana (Mouse-ear cress).